The following is a 667-amino-acid chain: Alpha-1,4-glucan:maltose-1-phosphate maltosyltransferase (667 aa).

3 residues coordinate alpha-maltose 1-phosphate: K261, Q321, and D356. D392 functions as the Nucleophile in the catalytic mechanism. Position 393 (N393) interacts with alpha-maltose 1-phosphate. E421 functions as the Proton donor in the catalytic mechanism. 534 to 535 is an alpha-maltose 1-phosphate binding site; the sequence is KY.

It belongs to the glycosyl hydrolase 13 family. GlgE subfamily. In terms of assembly, homodimer.

The catalysed reaction is alpha-maltose 1-phosphate + [(1-&gt;4)-alpha-D-glucosyl](n) = [(1-&gt;4)-alpha-D-glucosyl](n+2) + phosphate. Its function is as follows. Maltosyltransferase that uses maltose 1-phosphate (M1P) as the sugar donor to elongate linear or branched alpha-(1-&gt;4)-glucans. Is involved in a branched alpha-glucan biosynthetic pathway from trehalose, together with TreS, Mak and GlgB. The protein is Alpha-1,4-glucan:maltose-1-phosphate maltosyltransferase of Methylacidiphilum infernorum (isolate V4) (Methylokorus infernorum (strain V4)).